The sequence spans 122 residues: Large ribosomal subunit protein uL14 (122 aa).

It belongs to the universal ribosomal protein uL14 family. In terms of assembly, part of the 50S ribosomal subunit. Forms a cluster with proteins L3 and L19. In the 70S ribosome, L14 and L19 interact and together make contacts with the 16S rRNA in bridges B5 and B8.

In terms of biological role, binds to 23S rRNA. Forms part of two intersubunit bridges in the 70S ribosome. This Desulfatibacillum aliphaticivorans protein is Large ribosomal subunit protein uL14.